A 135-amino-acid chain; its full sequence is Ribosome-binding factor A (135 aa).

It belongs to the RbfA family. As to quaternary structure, monomer. Binds 30S ribosomal subunits, but not 50S ribosomal subunits or 70S ribosomes.

Its subcellular location is the cytoplasm. Functionally, one of several proteins that assist in the late maturation steps of the functional core of the 30S ribosomal subunit. Associates with free 30S ribosomal subunits (but not with 30S subunits that are part of 70S ribosomes or polysomes). Required for efficient processing of 16S rRNA. May interact with the 5'-terminal helix region of 16S rRNA. This chain is Ribosome-binding factor A, found in Dinoroseobacter shibae (strain DSM 16493 / NCIMB 14021 / DFL 12).